The primary structure comprises 167 residues: NADH-quinone oxidoreductase subunit B 1 (167 aa).

Positions 38, 39, 104, and 133 each coordinate [4Fe-4S] cluster.

This sequence belongs to the complex I 20 kDa subunit family. NDH-1 is composed of 14 different subunits. Subunits NuoB, C, D, E, F, and G constitute the peripheral sector of the complex. Requires [4Fe-4S] cluster as cofactor.

The protein localises to the cell membrane. It carries out the reaction a quinone + NADH + 5 H(+)(in) = a quinol + NAD(+) + 4 H(+)(out). NDH-1 shuttles electrons from NADH, via FMN and iron-sulfur (Fe-S) centers, to quinones in the respiratory chain. The immediate electron acceptor for the enzyme in this species is believed to be ubiquinone. Couples the redox reaction to proton translocation (for every two electrons transferred, four hydrogen ions are translocated across the cytoplasmic membrane), and thus conserves the redox energy in a proton gradient. The protein is NADH-quinone oxidoreductase subunit B 1 of Roseiflexus castenholzii (strain DSM 13941 / HLO8).